A 599-amino-acid chain; its full sequence is Proline--tRNA ligase (599 aa).

The protein belongs to the class-II aminoacyl-tRNA synthetase family. ProS type 1 subfamily. Homodimer.

The protein resides in the cytoplasm. The catalysed reaction is tRNA(Pro) + L-proline + ATP = L-prolyl-tRNA(Pro) + AMP + diphosphate. Its function is as follows. Catalyzes the attachment of proline to tRNA(Pro) in a two-step reaction: proline is first activated by ATP to form Pro-AMP and then transferred to the acceptor end of tRNA(Pro). As ProRS can inadvertently accommodate and process non-cognate amino acids such as alanine and cysteine, to avoid such errors it has two additional distinct editing activities against alanine. One activity is designated as 'pretransfer' editing and involves the tRNA(Pro)-independent hydrolysis of activated Ala-AMP. The other activity is designated 'posttransfer' editing and involves deacylation of mischarged Ala-tRNA(Pro). The misacylated Cys-tRNA(Pro) is not edited by ProRS. This is Proline--tRNA ligase from Bifidobacterium animalis subsp. lactis (strain AD011).